Here is a 377-residue protein sequence, read N- to C-terminus: tRNA-specific 2-thiouridylase MnmA (377 aa).

ATP is bound by residues 8–15 and Met-34; that span reads GMSGGVDS. Residues 94–96 are interaction with target base in tRNA; that stretch reads NPD. Cys-99 serves as the catalytic Nucleophile. A disulfide bridge links Cys-99 with Cys-201. Gly-123 provides a ligand contact to ATP. The interval 151–153 is interaction with tRNA; sequence KDQ. Cys-201 (cysteine persulfide intermediate) is an active-site residue. The interaction with tRNA stretch occupies residues 315 to 316; the sequence is RY.

The protein belongs to the MnmA/TRMU family.

It is found in the cytoplasm. The catalysed reaction is S-sulfanyl-L-cysteinyl-[protein] + uridine(34) in tRNA + AH2 + ATP = 2-thiouridine(34) in tRNA + L-cysteinyl-[protein] + A + AMP + diphosphate + H(+). Catalyzes the 2-thiolation of uridine at the wobble position (U34) of tRNA, leading to the formation of s(2)U34. The chain is tRNA-specific 2-thiouridylase MnmA from Acinetobacter baylyi (strain ATCC 33305 / BD413 / ADP1).